Consider the following 473-residue polypeptide: N-lysine methyltransferase SETD6 (473 aa).

Positions 1 to 23 (MAAPAKRARVSGGSPLVAPCPSP) are disordered. Ser-14 and Ser-22 each carry phosphoserine. Residues 62–286 (PKVTVSRQGT…EGHEIFNTYG (225 aa)) enclose the SET domain. Lys-63 carries the N6-methylated lysine; by autocatalysis modification. 73-75 (AGY) serves as a coordination point for S-adenosyl-L-methionine. Trp-122 is a binding site for substrate. Lys-179 is modified (N6-methylated lysine; by autocatalysis). Tyr-223 provides a ligand contact to S-adenosyl-L-methionine. Residues Ser-224 and Gln-226 each contribute to the substrate site. S-adenosyl-L-methionine contacts are provided by residues 251-252 (NH) and Tyr-297. Lys-372 carries the N6-methylated lysine; by autocatalysis modification.

The protein belongs to the class V-like SAM-binding methyltransferase superfamily. Histone-lysine methyltransferase family. SETD6 subfamily. In terms of assembly, monomer, homodimer and homotrimer; these structures are stabilized in the presence of S-adenosyl-L-methionine (SAM). Automethylated.

It is found in the nucleus. The enzyme catalyses L-lysyl-[protein] + S-adenosyl-L-methionine = N(6)-methyl-L-lysyl-[protein] + S-adenosyl-L-homocysteine + H(+). It carries out the reaction L-lysyl(8)-[histone H2AZ] + S-adenosyl-L-methionine = N(6)-methyl-L-lysyl(8)-[histone H2AZ] + S-adenosyl-L-homocysteine + H(+). In terms of biological role, protein-lysine N-methyltransferase. Monomethylates 'Lys-310' of the RELA subunit of NF-kappa-B complex, leading to down-regulation of NF-kappa-B transcription factor activity. Monomethylates 'Lys-8' of H2AZ (H2AZK8me1). Required for the maintenance of embryonic stem cell self-renewal. Methylates PAK4. The sequence is that of N-lysine methyltransferase SETD6 (Setd6) from Mus musculus (Mouse).